The primary structure comprises 848 residues: Translation initiation factor IF-2 (848 aa).

A compositionally biased stretch (basic and acidic residues) spans 1–10; sequence MSENNNDKIT. Disordered stretches follow at residues 1-79 and 121-163; these read MSEN…EKPV and AERQ…LFSS. Residues 17-33 show a composition bias toward polar residues; sequence LKRSGSETNTVKQNFNH. The segment covering 121 to 138 has biased composition (basic and acidic residues); the sequence is AERQAAEKQAKESEEGLH. The span at 149-163 shows a compositional bias: polar residues; sequence KSSSNTTKPTPLFSS. The region spanning 346–513 is the tr-type G domain; it reads TRPPIVTIMG…AILLQAEILD (168 aa). Residues 355 to 362 are G1; the sequence is GHVDHGKT. A GTP-binding site is contributed by 355–362; it reads GHVDHGKT. Positions 380 to 384 are G2; it reads GITQH. Residues 401–404 are G3; the sequence is DTPG. GTP is bound by residues 401-405 and 455-458; these read DTPGH and NKID. Residues 455–458 form a G4 region; sequence NKID. The segment at 491–493 is G5; that stretch reads SAK.

It belongs to the TRAFAC class translation factor GTPase superfamily. Classic translation factor GTPase family. IF-2 subfamily.

The protein resides in the cytoplasm. One of the essential components for the initiation of protein synthesis. Protects formylmethionyl-tRNA from spontaneous hydrolysis and promotes its binding to the 30S ribosomal subunits. Also involved in the hydrolysis of GTP during the formation of the 70S ribosomal complex. This Bartonella bacilliformis (strain ATCC 35685 / KC583 / Herrer 020/F12,63) protein is Translation initiation factor IF-2.